Reading from the N-terminus, the 134-residue chain is ATP synthase epsilon chain (134 aa).

Belongs to the ATPase epsilon chain family. In terms of assembly, F-type ATPases have 2 components, CF(1) - the catalytic core - and CF(0) - the membrane proton channel. CF(1) has five subunits: alpha(3), beta(3), gamma(1), delta(1), epsilon(1). CF(0) has three main subunits: a, b and c.

Its subcellular location is the cell inner membrane. Its function is as follows. Produces ATP from ADP in the presence of a proton gradient across the membrane. This is ATP synthase epsilon chain from Rhizobium meliloti (strain 1021) (Ensifer meliloti).